We begin with the raw amino-acid sequence, 349 residues long: Protein BPS1, chloroplastic (349 aa).

The N-terminal 43 residues, 1-43, are a transit peptide targeting the chloroplast; the sequence is MARPQDPPRGFFPFGNPFKNLSSKNSVLSSKLLPLLNNFETNL.

Expressed in roots, hypocotyls, cotyledons, leaves, flowers and siliques.

It is found in the plastid. The protein resides in the chloroplast. Functionally, required for normal root and shoot development. Prevents constitutive production of a root mobile carotenoid-derived signaling compound that is capable of arresting shoot and leaf development. This Arabidopsis thaliana (Mouse-ear cress) protein is Protein BPS1, chloroplastic.